The primary structure comprises 271 residues: Secretagogin (271 aa).

6 EF-hand domains span residues 8–43 (LDAA…LLKK), 53–88 (KVQG…EDEN), 100–135 (DNSV…LFLQ), 144–179 (KLDE…QENF), 192–227 (ERKS…MMEL), and 235–271 (VDLD…KANP). Aspartate 21, aspartate 23, asparagine 25, tyrosine 27, and glutamate 32 together coordinate Ca(2+). Aspartate 113, aspartate 115, serine 117, glutamate 124, asparagine 159, aspartate 161, arginine 163, aspartate 168, aspartate 205, serine 207, threonine 209, glutamate 216, aspartate 249, asparagine 251, aspartate 253, lysine 255, and glutamate 260 together coordinate Ca(2+).

The protein localises to the cytoplasm. In Xenopus laevis (African clawed frog), this protein is Secretagogin (scgn).